The following is a 342-amino-acid chain: Ferrochelatase (342 aa).

The Fe cation site is built by histidine 188 and glutamate 268.

The protein belongs to the ferrochelatase family.

The protein localises to the cytoplasm. The enzyme catalyses heme b + 2 H(+) = protoporphyrin IX + Fe(2+). It participates in porphyrin-containing compound metabolism; protoheme biosynthesis; protoheme from protoporphyrin-IX: step 1/1. In terms of biological role, catalyzes the ferrous insertion into protoporphyrin IX. The chain is Ferrochelatase from Rickettsia typhi (strain ATCC VR-144 / Wilmington).